The primary structure comprises 185 residues: Large ribosomal subunit protein uL5 (185 aa).

It belongs to the universal ribosomal protein uL5 family. As to quaternary structure, part of the 50S ribosomal subunit; part of the 5S rRNA/L5/L18/L25 subcomplex. Contacts the 5S rRNA and the P site tRNA. Forms a bridge to the 30S subunit in the 70S ribosome.

Its function is as follows. This is one of the proteins that bind and probably mediate the attachment of the 5S RNA into the large ribosomal subunit, where it forms part of the central protuberance. In the 70S ribosome it contacts protein S13 of the 30S subunit (bridge B1b), connecting the 2 subunits; this bridge is implicated in subunit movement. Contacts the P site tRNA; the 5S rRNA and some of its associated proteins might help stabilize positioning of ribosome-bound tRNAs. In Bradyrhizobium sp. (strain ORS 278), this protein is Large ribosomal subunit protein uL5.